The sequence spans 184 residues: Small ribosomal subunit protein bS16 (184 aa).

Positions 150-160 are enriched in basic and acidic residues; that stretch reads KKAAEAAEKAA. The tract at residues 150–184 is disordered; that stretch reads KKAAEAAEKAAAEAPAEEATEAPAEEAAATEAAAE. Over residues 164 to 173 the composition is skewed to acidic residues; that stretch reads PAEEATEAPA. Over residues 174-184 the composition is skewed to low complexity; sequence EEAAATEAAAE.

The protein belongs to the bacterial ribosomal protein bS16 family.

The protein is Small ribosomal subunit protein bS16 of Bacteroides thetaiotaomicron (strain ATCC 29148 / DSM 2079 / JCM 5827 / CCUG 10774 / NCTC 10582 / VPI-5482 / E50).